The primary structure comprises 428 residues: 3-phosphoshikimate 1-carboxyvinyltransferase (428 aa).

3-phosphoshikimate is bound by residues Lys21, Ser22, and Arg26. Residue Lys21 participates in phosphoenolpyruvate binding. Positions 91 and 119 each coordinate phosphoenolpyruvate. Ser164, Gln166, Asp313, and Lys340 together coordinate 3-phosphoshikimate. Gln166 contacts phosphoenolpyruvate. Asp313 acts as the Proton acceptor in catalysis. Phosphoenolpyruvate is bound by residues Arg344 and Arg386.

Belongs to the EPSP synthase family. Monomer.

The protein resides in the cytoplasm. The enzyme catalyses 3-phosphoshikimate + phosphoenolpyruvate = 5-O-(1-carboxyvinyl)-3-phosphoshikimate + phosphate. The protein operates within metabolic intermediate biosynthesis; chorismate biosynthesis; chorismate from D-erythrose 4-phosphate and phosphoenolpyruvate: step 6/7. Functionally, catalyzes the transfer of the enolpyruvyl moiety of phosphoenolpyruvate (PEP) to the 5-hydroxyl of shikimate-3-phosphate (S3P) to produce enolpyruvyl shikimate-3-phosphate and inorganic phosphate. This is 3-phosphoshikimate 1-carboxyvinyltransferase from Campylobacter jejuni subsp. jejuni serotype O:6 (strain 81116 / NCTC 11828).